The primary structure comprises 184 residues: Troponin I, slow skeletal muscle (184 aa).

N-acetylproline; partial is present on Pro1. The involved in binding TNC stretch occupies residues 1-45 (PEVERKSKITASRKLLKSLMLAKAKECQQEHEAREAEKVRYLAER). Ser55 is modified (phosphoserine). An involved in binding TNC and actin region spans residues 94–115 (LKLKVLDLRGKFKRPPLRRVRV).

This sequence belongs to the troponin I family. In terms of assembly, binds to actin and tropomyosin. In the muscle sample, approximately 25% of the chains were blocked. Pro-1 is probably acetylated. In terms of processing, the N-terminus is blocked.

In terms of biological role, troponin I is the inhibitory subunit of troponin, the thin filament regulatory complex which confers calcium-sensitivity to striated muscle actomyosin ATPase activity. In Oryctolagus cuniculus (Rabbit), this protein is Troponin I, slow skeletal muscle (TNNI1).